Reading from the N-terminus, the 279-residue chain is HTH-type transcriptional regulator HdfR (279 aa).

The HTH lysR-type domain maps to 1–58; that stretch reads MDTELLKTFLEVSRTRHFGRAAESLYLTQSAVSFRIRQLENQLGVNLFTRHRNNIRLT. The segment at residues 18–37 is a DNA-binding region (H-T-H motif); that stretch reads FGRAAESLYLTQSAVSFRIR.

It belongs to the LysR transcriptional regulatory family.

Negatively regulates the transcription of the flagellar master operon flhDC by binding to the upstream region of the operon. The sequence is that of HTH-type transcriptional regulator HdfR from Escherichia coli O6:K15:H31 (strain 536 / UPEC).